Consider the following 119-residue polypeptide: MKKIKEAEQRKIRRKKRIKDKIGRGIATRPRITIFKSNRYFYAQVIDDSKGHTVASISTIEKSLNLSKNIDDIKKLGEVLAKRLKEKNINNLIFDRNGYKYHGLIASFATSLREFGINI.

Belongs to the universal ribosomal protein uL18 family. In terms of assembly, part of the 50S ribosomal subunit; part of the 5S rRNA/L5/L18/L25 subcomplex. Contacts the 5S and 23S rRNAs.

Functionally, this is one of the proteins that bind and probably mediate the attachment of the 5S RNA into the large ribosomal subunit, where it forms part of the central protuberance. In Borreliella afzelii (strain PKo) (Borrelia afzelii), this protein is Large ribosomal subunit protein uL18.